The primary structure comprises 119 residues: Aspartate 1-decarboxylase (119 aa).

The active-site Schiff-base intermediate with substrate; via pyruvic acid is Ser25. Ser25 carries the pyruvic acid (Ser) modification. Thr57 contacts substrate. Catalysis depends on Tyr58, which acts as the Proton donor. 73–75 (GAA) is a substrate binding site.

The protein belongs to the PanD family. Heterooctamer of four alpha and four beta subunits. The cofactor is pyruvate. Is synthesized initially as an inactive proenzyme, which is activated by self-cleavage at a specific serine bond to produce a beta-subunit with a hydroxyl group at its C-terminus and an alpha-subunit with a pyruvoyl group at its N-terminus.

It is found in the cytoplasm. It carries out the reaction L-aspartate + H(+) = beta-alanine + CO2. The protein operates within cofactor biosynthesis; (R)-pantothenate biosynthesis; beta-alanine from L-aspartate: step 1/1. In terms of biological role, catalyzes the pyruvoyl-dependent decarboxylation of aspartate to produce beta-alanine. In Herminiimonas arsenicoxydans, this protein is Aspartate 1-decarboxylase.